Reading from the N-terminus, the 637-residue chain is Biosynthetic arginine decarboxylase (637 aa).

Lys-101 carries the N6-(pyridoxal phosphate)lysine modification. 286–296 (FDVGGGLAVDY) is a binding site for substrate.

It belongs to the Orn/Lys/Arg decarboxylase class-II family. SpeA subfamily. It depends on Mg(2+) as a cofactor. Pyridoxal 5'-phosphate is required as a cofactor.

It catalyses the reaction L-arginine + H(+) = agmatine + CO2. It participates in amine and polyamine biosynthesis; agmatine biosynthesis; agmatine from L-arginine: step 1/1. Catalyzes the biosynthesis of agmatine from arginine. The chain is Biosynthetic arginine decarboxylase from Shewanella sp. (strain MR-7).